Consider the following 170-residue polypeptide: Adenine phosphoribosyltransferase (170 aa).

It belongs to the purine/pyrimidine phosphoribosyltransferase family. Homodimer.

The protein resides in the cytoplasm. It carries out the reaction AMP + diphosphate = 5-phospho-alpha-D-ribose 1-diphosphate + adenine. It functions in the pathway purine metabolism; AMP biosynthesis via salvage pathway; AMP from adenine: step 1/1. Its function is as follows. Catalyzes a salvage reaction resulting in the formation of AMP, that is energically less costly than de novo synthesis. The polypeptide is Adenine phosphoribosyltransferase (Mycoplasma mycoides subsp. mycoides SC (strain CCUG 32753 / NCTC 10114 / PG1)).